The following is a 711-amino-acid chain: Probable cyclic nucleotide-gated ion channel 10 (711 aa).

The Cytoplasmic segment spans residues 1-81 (MAFSHDNRVR…QDSFLQNWNK (81 aa)). The helical transmembrane segment at 82-102 (IFLFACVVALAIDPLFFYIPI) threads the bilayer. The Extracellular portion of the chain corresponds to 103–116 (VDSARHCLTLDSKL). A helical transmembrane segment spans residues 117-137 (EIAASLLRTLIDAFYIIHIVF). Residues 138 to 170 (QFRTAYIAPSSRVFGRGELVDDAKAIALKYLSS) are Cytoplasmic-facing. A helical membrane pass occupies residues 171–191 (YFIIDLLSILPLPQIVVLAVI). The Extracellular segment spans residues 192–204 (PSVNQPVSLLTKD). A helical transmembrane segment spans residues 205–225 (YLKFSIIAQYVPRILRMYPLY). Over 226-243 (TEVTRTSGIVTETAWAGA) the chain is Cytoplasmic. A helical transmembrane segment spans residues 244–264 (AWNLSLYMLASHVFGALWYLI). The Extracellular portion of the chain corresponds to 265 to 366 (SVEREDRCWQ…GQNLQTSKFV (102 aa)). The chain crosses the membrane as a helical span at residues 367–387 (GEIIFAISICISGLVLFALLI). The Cytoplasmic segment spans residues 388 to 711 (GNMQKYLEST…DFTANHTTDP (324 aa)). Residues 473-603 (LFEI…TFRF) and glutamate 544 each bind a nucleoside 3',5'-cyclic phosphate. Residues 589–604 (FRRLHSKQLQHTFRFY) form a calmodulin-binding region. The IQ domain maps to 609–638 (RTWSVSFIQAAWRRYCRRKLAKSLRDEEDR). The disordered stretch occupies residues 689-711 (YTLPLLPQKPTEPDFTANHTTDP).

The protein belongs to the cyclic nucleotide-gated cation channel (TC 1.A.1.5) family. As to quaternary structure, homotetramer or heterotetramer.

The protein resides in the cell membrane. Probable cyclic nucleotide-gated ion channel. The chain is Probable cyclic nucleotide-gated ion channel 10 (CNGC10) from Arabidopsis thaliana (Mouse-ear cress).